A 169-amino-acid polypeptide reads, in one-letter code: Large ribosomal subunit protein uL10 (169 aa).

This sequence belongs to the universal ribosomal protein uL10 family. As to quaternary structure, part of the 50S ribosomal subunit.

The chain is Large ribosomal subunit protein uL10 (rplJ) from Deinococcus radiodurans (strain ATCC 13939 / DSM 20539 / JCM 16871 / CCUG 27074 / LMG 4051 / NBRC 15346 / NCIMB 9279 / VKM B-1422 / R1).